Reading from the N-terminus, the 269-residue chain is Regulatory protein RecX (269 aa).

Belongs to the RecX family.

The protein resides in the cytoplasm. In terms of biological role, modulates RecA activity. The sequence is that of Regulatory protein RecX from Listeria welshimeri serovar 6b (strain ATCC 35897 / DSM 20650 / CCUG 15529 / CIP 8149 / NCTC 11857 / SLCC 5334 / V8).